A 758-amino-acid chain; its full sequence is Spastin (758 aa).

The interval 1-103 (MVRTKNQSSS…SPRSGHHHSY (103 aa)) is disordered. The Cytoplasmic segment spans residues 1–121 (MVRTKNQSSS…KQNLYVVSFP (121 aa)). The segment at 1–159 (MVRTKNQSSS…VIYRPHRRDC (159 aa)) is interaction with atl. Residues 1–210 (MVRTKNQSSS…RPIQPLEMAA (210 aa)) are required for localization to punctate cytoplasmic foci. 4 stretches are compositionally biased toward low complexity: residues 8–28 (SSSS…SSGA), 43–58 (RSSS…AGGS), 66–76 (SSNRRSPGSSP), and 85–95 (TDDLTPTTCSP). Residues 122–142 (IIFLFNVLRSLIYQLFCIFRY) constitute an intramembrane region (helical). Over 143-758 (LYGASTKVIY…WSQDYGDITI (616 aa)) the chain is Cytoplasmic. Polar residues-rich tracts occupy residues 169 to 180 (SKEQQQSLNHPS) and 189 to 198 (QEQQLSNQPQ). Residues 169-202 (SKEQQQSLNHPSELNREGDGQEQQLSNQPQRFRP) form a disordered region. Residues 208–758 (MAANRPGGGY…WSQDYGDITI (551 aa)) are sufficient for interaction with microtubules and microtubule severing. One can recognise an MIT domain in the interval 233–308 (HRRAFEYISK…SMARDRLHFL (76 aa)). The disordered stretch occupies residues 353–454 (RVRSSGYGPK…GPSGSGASTP (102 aa)). Polar residues-rich tracts occupy residues 390–406 (NKSQ…TSVG) and 425–454 (QFSS…ASTP). Thr439 is modified (phosphothreonine). The segment at 443–455 (NNGPSGSGASTPV) is required for interaction with microtubules. ATP is bound at residue 523-530 (GPPGNGKT).

It belongs to the AAA ATPase family. Spastin subfamily. In terms of assembly, homohexamer. The homohexamer is stabilized by ATP-binding. The homohexamer may adopt a ring conformation through which microtubules pass prior to being severed. Interacts with microtubules. Interacts with atl; may be involved in microtubule dynamics.

Its subcellular location is the membrane. It localises to the cytoplasm. It is found in the cytoskeleton. The protein localises to the microtubule organizing center. The protein resides in the centrosome. Its subcellular location is the chromosome. It localises to the lipid droplet. The catalysed reaction is n ATP + n H2O + a microtubule = n ADP + n phosphate + (n+1) alpha/beta tubulin heterodimers.. ATP-dependent microtubule severing protein. Stimulates microtubule minus-end depolymerization and poleward microtubule flux in the mitotic spindle. Regulates microtubule stability in the neuromuscular junction synapse. Involved in lipid metabolism by regulating the size and distribution of lipid droplets. Involved in axon regeneration by regulating microtubule severing. This is Spastin from Drosophila melanogaster (Fruit fly).